A 187-amino-acid chain; its full sequence is Adenylate kinase 1 (187 aa).

Position 14-19 (14-19 (GSGKGT)) interacts with ATP. The NMP stretch occupies residues 34–63 (STGDMLRQAIADGTELGNQAKGYMDKGELV). Residues Thr35, Arg40, 61-63 (ELV), 89-92 (GFPR), and Gln96 contribute to the AMP site. The LID stretch occupies residues 130–136 (ARGRADD). ATP is bound at residue Arg131. Residues Arg133 and Arg144 each coordinate AMP. Gln172 contacts ATP.

Belongs to the adenylate kinase family. As to quaternary structure, monomer.

It localises to the cytoplasm. The enzyme catalyses AMP + ATP = 2 ADP. Its pathway is purine metabolism; AMP biosynthesis via salvage pathway; AMP from ADP: step 1/1. In terms of biological role, catalyzes the reversible transfer of the terminal phosphate group between ATP and AMP. Plays an important role in cellular energy homeostasis and in adenine nucleotide metabolism. The protein is Adenylate kinase 1 of Synechocystis sp. (strain ATCC 27184 / PCC 6803 / Kazusa).